We begin with the raw amino-acid sequence, 1854 residues long: PKS-NRPS hybrid synthetase ATPKS (1854 aa).

The interval 24 to 423 is adenylation (A) domain; that stretch reads FDQTQTRYSP…GRADTQIKIR (400 aa). In terms of domain architecture, Carrier 1 spans 523–598; it reads IPASTLTQQL…NLAAYLSDQT (76 aa). Serine 558 is subject to O-(pantetheine 4'-phosphoryl)serine. Positions 617-1049 constitute a Ketosynthase family 3 (KS3) domain; sequence GEDIAVISMA…GTNAHAIIEE (433 aa). Active-site for beta-ketoacyl synthase activity residues include cysteine 791, histidine 926, and histidine 967. The interval 1162 to 1496 is malonyl-CoA:ACP transacylase (MAT) domain; sequence LFSGQGTERA…SLSDLHIRKV (335 aa). Positions 1536-1556 are disordered; it reads KSSGQPSGQSPSGCPQPTGQI. Low complexity predominate over residues 1537–1555; it reads SSGQPSGQSPSGCPQPTGQ. The region spanning 1776-1851 is the Carrier 2 domain; sequence MMLQGLVRGI…SLSDALQKQV (76 aa). Serine 1811 is subject to O-(pantetheine 4'-phosphoryl)serine.

This sequence in the C-terminal section; belongs to the NRP synthetase family.

Its pathway is secondary metabolite biosynthesis. PKS-NRPS hybrid synthetase; part of the gene cluster that mediates the biosynthesis of pyrophen and campyrone B, which represent a class of fungal amino acid-derived alpha-pyrone natural products. The first step of pyrophen biosynthesis is catalyzed by the PKS-NRPS hybrid synthetase ATPKS that uptakes and condensates L-phenylalanine and malonyl-CoA in order to produce desmethyldesacetylpyrophen. Although the A domain does not discriminate between 2 enantiomeric phenylalanines, the downstream KS domain must play a gate keeping role to stereoselectively accept the L-phenylalanyl-S-phosphopantetheine (Ppant)-T domain intermediate for chain elongation. The resulting amino acid derived diketide is off-loaded through lactonization to yield the alpha-pyrone intermediate desmethyldesacetylpyrophen. The cluster-specific O-methyltransferase (OMT) then methylates desmethyldesacetylpyrophen to desacetylpyrophen, which is further acetylated to pyrophen by an endogenous yet unidentified N-acetyltransferase. ATPKS has relaxed substrate specificity to activate and extend branched-chain amino acid L-leucine to produce small amounts of campyrone B. The protein is PKS-NRPS hybrid synthetase ATPKS of Aspergillus niger (strain ATCC 1015 / CBS 113.46 / FGSC A1144 / LSHB Ac4 / NCTC 3858a / NRRL 328 / USDA 3528.7).